The primary structure comprises 257 residues: MSGYPKSYNPFDDDVEDEDTRPAPWKDARDLPDGPDPPIDRQQYLRQEVLRGPSATAASTSRSLFLMYESEKIGVASSEELVRQRGVLEHTEKMVDKMDQDLKMSQKHINSIKSVFGGFINYFKSKPVEPPPEQNGSIVPQPSSRLKEAINTSKDQESKYQASHPNLRRLHDAELDSVPASTVNTEVYPKNSSLRAYHQKIDSNLDELSVGLGRLKDIALGMQTEIEEQDDILDRLTTKVDKLDVNIKSTEKKVRQL.

The interval 1–42 (MSGYPKSYNPFDDDVEDEDTRPAPWKDARDLPDGPDPPIDRQ) is disordered. Basic and acidic residues predominate over residues 20-32 (TRPAPWKDARDLP). Serine 77, serine 78, serine 114, serine 163, serine 181, serine 203, and serine 209 each carry phosphoserine. In terms of domain architecture, t-SNARE coiled-coil homology spans 195–257 (RAYHQKIDSN…KSTEKKVRQL (63 aa)).

This sequence belongs to the SNAP-25 family. Forms a SNARE complex, composed of VAMP8, SNAP29 and STX17, involved in fusion of autophagosome with lysosome. Interacts with multiple syntaxins including STX6. Interacts with EIPR1. Interacts with STX17; this interaction is increased in the absence of TMEM39A. Widely expressed.

It localises to the cytoplasm. The protein resides in the golgi apparatus membrane. Its subcellular location is the cytoplasmic vesicle. The protein localises to the autophagosome membrane. It is found in the cell projection. It localises to the cilium membrane. Functionally, SNAREs, soluble N-ethylmaleimide-sensitive factor-attachment protein receptors, are essential proteins for fusion of cellular membranes. SNAREs localized on opposing membranes assemble to form a trans-SNARE complex, an extended, parallel four alpha-helical bundle that drives membrane fusion. SNAP29 is a SNARE involved in autophagy through the direct control of autophagosome membrane fusion with the lysososome membrane. Also plays a role in ciliogenesis by regulating membrane fusions. This chain is Synaptosomal-associated protein 29, found in Rattus norvegicus (Rat).